A 147-amino-acid polypeptide reads, in one-letter code: Lysozyme C-2 (147 aa).

Positions 1–18 (MKALVILGFLFLSVAVQG) are cleaved as a signal peptide. In terms of domain architecture, C-type lysozyme spans 19–147 (KVFERCELAR…VSSYVEGCTL (129 aa)). Cystine bridges form between cysteine 24–cysteine 145, cysteine 48–cysteine 133, cysteine 83–cysteine 99, and cysteine 95–cysteine 113. Residues glutamate 53 and aspartate 71 contribute to the active site.

It belongs to the glycosyl hydrolase 22 family. In terms of assembly, monomer. Stomach-specific.

The enzyme catalyses Hydrolysis of (1-&gt;4)-beta-linkages between N-acetylmuramic acid and N-acetyl-D-glucosamine residues in a peptidoglycan and between N-acetyl-D-glucosamine residues in chitodextrins.. Lysozymes have primarily a bacteriolytic function; those in tissues and body fluids are associated with the monocyte-macrophage system and enhance the activity of immunoagents. The chain is Lysozyme C-2 (LYZ2) from Bos taurus (Bovine).